The primary structure comprises 339 residues: N-acetylmuramate/N-acetylglucosamine kinase (339 aa).

Belongs to the kinase AmgK family.

The enzyme catalyses N-acetyl-D-muramate + ATP = N-acetyl-alpha-D-muramate 1-phosphate + ADP + H(+). The catalysed reaction is N-acetyl-D-glucosamine + ATP = N-acetyl-alpha-D-glucosamine 1-phosphate + ADP + H(+). The protein operates within cell wall biogenesis; peptidoglycan recycling. Its function is as follows. Sugar kinase that catalyzes the ATP-dependent phosphorylation of N-acetylmuramate (MurNAc) and N-acetylglucosamine (GlcNAc) at its C1 hydroxyl group, leading to MurNAc alpha-1P and GlcNAc alpha-1P, respectively. Is involved in peptidoglycan recycling as part of a cell wall recycling pathway that bypasses de novo biosynthesis of the peptidoglycan precursor UDP-MurNAc. Plays a role in intrinsic resistance to fosfomycin, which targets the de novo synthesis of UDP-MurNAc. Is also able to use N-acetylgalactosamine (GalNAc) as a substrate, but not N-acetylmannosamine, N-deacetylated sugars or glucose. The chain is N-acetylmuramate/N-acetylglucosamine kinase from Pseudomonas putida (strain ATCC 47054 / DSM 6125 / CFBP 8728 / NCIMB 11950 / KT2440).